The following is a 427-amino-acid chain: Histidine--tRNA ligase (427 aa).

Belongs to the class-II aminoacyl-tRNA synthetase family. Homodimer.

The protein resides in the cytoplasm. The enzyme catalyses tRNA(His) + L-histidine + ATP = L-histidyl-tRNA(His) + AMP + diphosphate + H(+). The polypeptide is Histidine--tRNA ligase (Alteromonas mediterranea (strain DSM 17117 / CIP 110805 / LMG 28347 / Deep ecotype)).